A 349-amino-acid polypeptide reads, in one-letter code: Hydroxymethylglutaryl-CoA synthase (349 aa).

Residue Asp-29 coordinates (3S)-3-hydroxy-3-methylglutaryl-CoA. The active-site Proton donor/acceptor is Glu-81. (3S)-3-hydroxy-3-methylglutaryl-CoA contacts are provided by Cys-113, Ser-154, Thr-202, and His-235. The active-site Acyl-thioester intermediate is the Cys-113. The Proton donor/acceptor role is filled by His-235. Arg-240 serves as a coordination point for CoA. Positions 244, 267, and 297 each coordinate (3S)-3-hydroxy-3-methylglutaryl-CoA.

Belongs to the thiolase-like superfamily. Archaeal HMG-CoA synthase family. As to quaternary structure, interacts with acetoacetyl-CoA thiolase that catalyzes the precedent step in the pathway and with a DUF35 protein. The acetoacetyl-CoA thiolase/HMG-CoA synthase complex channels the intermediate via a fused CoA-binding site, which allows for efficient coupling of the endergonic thiolase reaction with the exergonic HMGCS reaction.

It catalyses the reaction acetoacetyl-CoA + acetyl-CoA + H2O = (3S)-3-hydroxy-3-methylglutaryl-CoA + CoA + H(+). It participates in metabolic intermediate biosynthesis; (R)-mevalonate biosynthesis; (R)-mevalonate from acetyl-CoA: step 2/3. Catalyzes the condensation of acetyl-CoA with acetoacetyl-CoA to form 3-hydroxy-3-methylglutaryl-CoA (HMG-CoA). Functions in the mevalonate (MVA) pathway leading to isopentenyl diphosphate (IPP), a key precursor for the biosynthesis of isoprenoid compounds that are building blocks of archaeal membrane lipids. The protein is Hydroxymethylglutaryl-CoA synthase of Pyrobaculum arsenaticum (strain DSM 13514 / JCM 11321 / PZ6).